Reading from the N-terminus, the 678-residue chain is DNA ligase (678 aa).

NAD(+)-binding positions include Asp-36 to Asp-40, Ser-85 to Leu-86, and Glu-117. Catalysis depends on Lys-119, which acts as the N6-AMP-lysine intermediate. NAD(+)-binding residues include Arg-140, Glu-177, Lys-294, and Lys-318. Zn(2+) is bound by residues Cys-412, Cys-415, Cys-430, and Cys-436. The BRCT domain occupies Ala-595–Val-678.

The protein belongs to the NAD-dependent DNA ligase family. LigA subfamily. Mg(2+) serves as cofactor. Requires Mn(2+) as cofactor.

The catalysed reaction is NAD(+) + (deoxyribonucleotide)n-3'-hydroxyl + 5'-phospho-(deoxyribonucleotide)m = (deoxyribonucleotide)n+m + AMP + beta-nicotinamide D-nucleotide.. Its function is as follows. DNA ligase that catalyzes the formation of phosphodiester linkages between 5'-phosphoryl and 3'-hydroxyl groups in double-stranded DNA using NAD as a coenzyme and as the energy source for the reaction. It is essential for DNA replication and repair of damaged DNA. This chain is DNA ligase, found in Marinobacter nauticus (strain ATCC 700491 / DSM 11845 / VT8) (Marinobacter aquaeolei).